Consider the following 192-residue polypeptide: MLEEIKAQLRAHCEVMTALQGELSPAIESAVSLVVDAYRAGNKLLVMGNGGSAADAQHFVAEMVGRFKLERRALPAIALHTDTSILTAIGNDYGFDRIFSRQVEAHAAAGDVVVGISTSGNSPNVQLALELAREKGCRTVALLGKDGGSIKSVAELPLIVPSNDTPRIQEGHITIIHIICDLVERELFLKGN.

In terms of domain architecture, SIS spans 34–192 (VVDAYRAGNK…VERELFLKGN (159 aa)). 49-51 (NGG) provides a ligand contact to substrate. 2 residues coordinate Zn(2+): histidine 58 and glutamate 62. Substrate contacts are provided by residues glutamate 62, 91-92 (ND), 117-119 (STS), serine 122, and glutamine 169. Positions 169 and 177 each coordinate Zn(2+).

The protein belongs to the SIS family. GmhA subfamily. Homotetramer. It depends on Zn(2+) as a cofactor.

The protein localises to the cytoplasm. The catalysed reaction is 2 D-sedoheptulose 7-phosphate = D-glycero-alpha-D-manno-heptose 7-phosphate + D-glycero-beta-D-manno-heptose 7-phosphate. It functions in the pathway carbohydrate biosynthesis; D-glycero-D-manno-heptose 7-phosphate biosynthesis; D-glycero-alpha-D-manno-heptose 7-phosphate and D-glycero-beta-D-manno-heptose 7-phosphate from sedoheptulose 7-phosphate: step 1/1. Catalyzes the isomerization of sedoheptulose 7-phosphate in D-glycero-D-manno-heptose 7-phosphate. This Geobacter sp. (strain M21) protein is Phosphoheptose isomerase.